Reading from the N-terminus, the 217-residue chain is Elongation factor Ts (217 aa).

An involved in Mg(2+) ion dislocation from EF-Tu region spans residues 81–84 (TDFV).

This sequence belongs to the EF-Ts family.

It is found in the cytoplasm. Associates with the EF-Tu.GDP complex and induces the exchange of GDP to GTP. It remains bound to the aminoacyl-tRNA.EF-Tu.GTP complex up to the GTP hydrolysis stage on the ribosome. This chain is Elongation factor Ts, found in Myxococcus xanthus (strain DK1622).